A 478-amino-acid polypeptide reads, in one-letter code: PRAME family member 15 (478 aa).

The stretch at 99–126 is one LRR 1; degenerate repeat; it reads RWKLQVLDLQDVCENFWMVWSEAMAHGC. The stretch at 181–205 is one LRR 2; degenerate repeat; that stretch reads HLCCKKLKILGMPFRNIRSILKMVN. An LRR 3; degenerate repeat occupies 206–232; it reads LDCIQEVEVNCKWVLPILTQFTPYLGH. Residues 233-268 form an LRR 4; degenerate repeat; sequence MRNLQKLVLSHMDVSRYVSPEQKKEIVTQFTTQFLK. 5 LRR repeats span residues 269 to 294, 295 to 326, 327 to 347, 351 to 378, and 379 to 403; these read LRCLQKLYMNSVSFLEGHLDQLLSCL, KTSLKVLTITNCVLLESDLKHLSQCPSISQLK, TLDLSGIRLTNYSLVPLQILL, AATLEYLDLDDCGIIDSQVNAILPALSR, and CFELNTFSFCGNPICMATLENLLSH.

This sequence belongs to the PRAME family.

This chain is PRAME family member 15, found in Homo sapiens (Human).